We begin with the raw amino-acid sequence, 89 residues long: Small ribosomal subunit protein uS14 (89 aa).

This sequence belongs to the universal ribosomal protein uS14 family. In terms of assembly, part of the 30S ribosomal subunit. Contacts proteins S3 and S10.

In terms of biological role, binds 16S rRNA, required for the assembly of 30S particles and may also be responsible for determining the conformation of the 16S rRNA at the A site. This Leuconostoc mesenteroides subsp. mesenteroides (strain ATCC 8293 / DSM 20343 / BCRC 11652 / CCM 1803 / JCM 6124 / NCDO 523 / NBRC 100496 / NCIMB 8023 / NCTC 12954 / NRRL B-1118 / 37Y) protein is Small ribosomal subunit protein uS14.